The sequence spans 872 residues: MEVLKEKVEEEEAAEREEAAERAERGEKTKRPMEVRREETTMTQEMLRDLERKLSEIEVSVPEKLLAFTKDTIDTSKLPLSYQSNTLKEEHLLQVADNFSRQYSHLCPDRVPLFLHPLNECEVPKFVSTTIRPTLMPYPELYNWDTCAQFISDFLSMVPLPDPLKPPLYLYSSTTVLKYQKGNCFDFSTLLCSMLIGAGYDAYCVNGYGSQDLCHMDLTREVCPLTMKPKESVKEEEKAPPKKYAIKPPRDLTSRFEQEQEMKRQEAIKAEEENRRKQEEARLLEQENAKTDPLHGLRVHSWVLVLSGKREVPESFFIDPFTARSYSTQDDHFLGIESLWNHKNYWVNMQDCWNCCKDLVFDLGDPVRWEYLLLGTDKPFLSLTEEEDEGMNDDDDVENLGKEDEDKSFDMPPSWVEQIEISPEAFETRCPNGKKVIQYKRAKLEKWAPYLNNNGLVCRLTTYEDLECTKTLEMKEWYQNREDMLELKHINKITGLNVDYFKPGHPQALRVHSYKSMQPEMDRVMEFYETARVDGLIKREETPKTMTEHYQGRPDFLSYRHVNFGPRMKKLALNSAESNPRPMVKITERFFRNPAKPADEDVAERVFLIAEERIQLRYHCRSDHITANKREFLRRTEVDSKGNKIIMTPDMCISFEVEPMEHTKKLLYQYEAMMKLKNEEKLSRHQAWESELEVLEILKLREEEEEAHTLTISIYDTKRNEKCKEYREAMERVLHEEHLRQVEAQLDYLAPFLAQLPPGEKLTRWQAVRLKDECLNDFKQRLIDKANLIQARFEKETQELQKKQQWYQENQVTLTPEDEDLYLSYCSQAMFRIRILEQRLSRHKELAPLKYLALEEKLYKDPRLVELLKVFV.

Disordered stretches follow at residues 1-40, 231-281, and 385-410; these read MEVL…REET, ESVK…QEEA, and EEED…KSFD. The stretch at 1-64 forms a coiled coil; sequence MEVLKEKVEE…SEIEVSVPEK (64 aa). Composition is skewed to basic and acidic residues over residues 16-40, 231-240, and 248-281; these read REEA…REET, ESVKEEEKAP, and PPRD…QEEA. Residues 254–292 adopt a coiled-coil conformation; sequence SRFEQEQEMKRQEAIKAEEENRRKQEEARLLEQENAKTD. Residues 385–398 are compositionally biased toward acidic residues; that stretch reads EEEDEGMNDDDDVE. Basic and acidic residues predominate over residues 399–409; sequence NLGKEDEDKSF. 2 coiled-coil regions span residues 676 to 706 and 780 to 805; these read LKNE…EEEE and QRLI…KKQQ.

The protein belongs to the DRC7 family. In terms of assembly, component of the nexin-dynein regulatory complex (N-DRC). Interacts with TCTE1/DRC5. Interacts with DRC3 and GAS8/DRC4.

The protein resides in the cell projection. It localises to the cilium. Its subcellular location is the flagellum. The protein localises to the cytoplasm. It is found in the cytoskeleton. The protein resides in the cilium axoneme. It localises to the flagellum axoneme. Functionally, component of the nexin-dynein regulatory complex (N-DRC) a key regulator of ciliary/flagellar motility which maintains the alignment and integrity of the distal axoneme and regulates microtubule sliding in motile axonemes. Involved in the regulation of flagellar motility. Essential for male fertility, sperm head morphogenesis and sperm flagellum formation. The polypeptide is Dynein regulatory complex subunit 7 (DRC7) (Bos taurus (Bovine)).